The primary structure comprises 511 residues: Arabinose import ATP-binding protein AraG (511 aa).

ABC transporter domains follow at residues 5 to 240 and 240 to 501; these read LEFR…MVGR and RQID…LRPR. Residue 37–44 participates in ATP binding; the sequence is GENGAGKS.

Belongs to the ABC transporter superfamily. Arabinose importer (TC 3.A.1.2.2) family. The complex is composed of two ATP-binding proteins (AraG), two transmembrane proteins (AraH) and a solute-binding protein (AraF).

It is found in the cell inner membrane. The catalysed reaction is L-arabinose(out) + ATP + H2O = L-arabinose(in) + ADP + phosphate + H(+). In terms of biological role, part of the ABC transporter complex AraFGH involved in arabinose import. Responsible for energy coupling to the transport system. In Ralstonia nicotianae (strain ATCC BAA-1114 / GMI1000) (Ralstonia solanacearum), this protein is Arabinose import ATP-binding protein AraG.